The following is a 241-amino-acid chain: Uracil-DNA glycosylase (241 aa).

Asp-71 functions as the Proton acceptor in the catalytic mechanism. The segment at 221–241 is disordered; the sequence is ISPIDWSLPPRNELDTTSAGA.

This sequence belongs to the uracil-DNA glycosylase (UDG) superfamily. UNG family.

Its subcellular location is the cytoplasm. It catalyses the reaction Hydrolyzes single-stranded DNA or mismatched double-stranded DNA and polynucleotides, releasing free uracil.. Excises uracil residues from the DNA which can arise as a result of misincorporation of dUMP residues by DNA polymerase or due to deamination of cytosine. The chain is Uracil-DNA glycosylase from Xanthomonas oryzae pv. oryzae (strain MAFF 311018).